The primary structure comprises 344 residues: MQSITFTRPDDWHLHVRDGAALAAVVPHTAERFGRALIMPNLRPPVTTTAQALAYRDRIRAAVPAGLAFEPLMSLYLTDNTAPDEIERARASGAVIAAKLYPAGATTNSDAGVTAIDKIYPVLERMEACGLVLCVHGEVTGGEVDVFDRERVFMEKILSPLVRRFPALKVVFEHITTAEAAQFVRAAGANVAATVTAHHLLLNRNAIFAGGIRPHHYCLPVLKRETHRVALVEAVTSGNPRFFLGTDSAPHARSTKEAACGCAGCYTAHAGIELYAEVFDAAGALERLEAFASLNGPAFYGLAPNADKITLVRESWSVPAGFPYLDDDPLVPLRAGESVGWRLA.

Zn(2+)-binding residues include His13 and His15. Substrate is bound by residues 15-17 (HVR) and Asn41. Zn(2+) contacts are provided by Lys99, His136, and His174. An N6-carboxylysine modification is found at Lys99. A substrate-binding site is contributed by His136. Position 219 (Leu219) interacts with substrate. A Zn(2+)-binding site is contributed by Asp247. Residue Asp247 is part of the active site. Positions 251 and 263 each coordinate substrate.

The protein belongs to the metallo-dependent hydrolases superfamily. DHOase family. Class II DHOase subfamily. In terms of assembly, homodimer. Zn(2+) is required as a cofactor.

The enzyme catalyses (S)-dihydroorotate + H2O = N-carbamoyl-L-aspartate + H(+). It participates in pyrimidine metabolism; UMP biosynthesis via de novo pathway; (S)-dihydroorotate from bicarbonate: step 3/3. Catalyzes the reversible cyclization of carbamoyl aspartate to dihydroorotate. This Azoarcus sp. (strain BH72) protein is Dihydroorotase.